The following is a 131-amino-acid chain: MTAANQNYGTGRRKSSSARVFIKPGNGNITINQRSLDVYFGRETSRMVVRQPLELVELLDKLDLYITVKGGGISGQAGAIRHGITRALMEYDETLRPALRAAGFVTRDARRVERKKVGLHKARRRPQYSKR.

It belongs to the universal ribosomal protein uS9 family.

This chain is Small ribosomal subunit protein uS9, found in Actinobacillus pleuropneumoniae serotype 7 (strain AP76).